We begin with the raw amino-acid sequence, 672 residues long: Fumonisin cluster-specific transcription factor FUM21 (672 aa).

The segment at residues 30–56 (CESCKRRKVRCNGTNPCNQCQKSSIEC) is a DNA-binding region (zn(2)-C6 fungal-type). Disordered stretches follow at residues 65–111 (ANDG…RFDG) and 190–212 (KSSGPSYGMSEPPSRDSDPGFNT). The segment covering 77–93 (SPVQHTRGSLTPPQTSP) has biased composition (polar residues).

Its subcellular location is the nucleus. Its function is as follows. Transcription factor that regulates the expression of the gene cluster that mediates the biosynthesis of fumonisins B1 (FB1), B2 (FB2), B3 (FB3), and B4 (FB4), which are carcinogenic mycotoxins. The sequence is that of Fumonisin cluster-specific transcription factor FUM21 (FUM21) from Gibberella moniliformis (strain M3125 / FGSC 7600) (Maize ear and stalk rot fungus).